The following is a 259-amino-acid chain: Protein BEAN1 (259 aa).

A helical membrane pass occupies residues 36 to 56 (VLVASAVIGVVIILSCITIIV). The span at 71-89 (RHRHHRHHHHHHHHRRRRH) shows a compositional bias: basic residues. Disordered stretches follow at residues 71 to 91 (RHRH…RHRE) and 152 to 259 (VGPG…ERIV). A compositionally biased stretch (polar residues) spans 171–187 (LTDSCPTLDGTSDSGSG). Residues 221-230 (GAGPPSGLLP) are compositionally biased toward low complexity.

Interacts with NEDD4.

The protein localises to the membrane. The chain is Protein BEAN1 (BEAN1) from Homo sapiens (Human).